We begin with the raw amino-acid sequence, 117 residues long: Huntingtin-interacting protein M (117 aa).

Basic and acidic residues-rich tracts occupy residues 1–11 (MSEKKSQEKPC) and 83–97 (QDRERQRDNDREPSR). 2 disordered regions span residues 1–25 (MSEKKSQEKPCSDNNQIEDPSSRPE) and 74–117 (NINN…RRNG).

May interact with the N-terminus of HD.

The protein is Huntingtin-interacting protein M of Mus musculus (Mouse).